A 538-amino-acid chain; its full sequence is Putative cysteine ligase BshC (538 aa).

Residues 460–484 (KINEQIELLERMLKRNVEKKHEVEL) adopt a coiled-coil conformation.

The protein belongs to the BshC family.

Its function is as follows. Involved in bacillithiol (BSH) biosynthesis. May catalyze the last step of the pathway, the addition of cysteine to glucosamine malate (GlcN-Mal) to generate BSH. In Bacillus cereus (strain AH187), this protein is Putative cysteine ligase BshC.